The following is a 946-amino-acid chain: Nonribosomal peptide synthetase pngA (946 aa).

Residues 32-450 are adenylation (A) domain; sequence AIASREPTRY…AGREKDSIIV (419 aa). The 80-residue stretch at 580-659 folds into the Carrier domain; that stretch reads QPRSGLEQSL…TLSDALKQHA (80 aa). The residue at position 618 (Ser618) is an O-(pantetheine 4'-phosphoryl)serine. The segment at 681 to 933 is thioesterase (TE) domain; the sequence is PIWLVHPVGG…ILDAENIFSF (253 aa).

Belongs to the NRP synthetase family.

The enzyme catalyses 2 3-phenylpyruvate + H(+) = phenguignardate + H2O. In terms of biological role, nonribosomal peptide synthetase that mediates the biosynthesis of phenguignardic acid. PngA alone is sufficient for phenguignardic acid synthesis. PngA first activates phenylpyruvic acid (PPA) through its A domain to AMP-PPA. The PPA unit is then loaded to the T domain and eventually transferred to the TE domain. Another PPA unit is then loaded onto the T domain. The TE domain likely promotes the enolate formation on the attached unit, followed by a nucleophilic attack on the carbonyl to yield an ether linkage between the two units. Finally, the TE domain probably catalyzes a similar reaction to give the cyclized dioxolanone core and releases phenguignardic acid. This chain is Nonribosomal peptide synthetase pngA, found in Aspergillus terreus (strain NIH 2624 / FGSC A1156).